The sequence spans 87 residues: Small ribosomal subunit protein bS20 (87 aa).

Positions 1–22 are disordered; that stretch reads MANSAQARKRARQAVKQRAHNA. Over residues 7–19 the composition is skewed to basic residues; it reads ARKRARQAVKQRA.

Belongs to the bacterial ribosomal protein bS20 family.

In terms of biological role, binds directly to 16S ribosomal RNA. This is Small ribosomal subunit protein bS20 from Methylobacillus flagellatus (strain ATCC 51484 / DSM 6875 / VKM B-1610 / KT).